Here is a 266-residue protein sequence, read N- to C-terminus: UPF0294 protein YafD (266 aa).

Belongs to the UPF0294 family.

Its subcellular location is the cytoplasm. This chain is UPF0294 protein YafD, found in Salmonella newport (strain SL254).